Reading from the N-terminus, the 59-residue chain is Large ribosomal subunit protein uL30 (59 aa).

The protein belongs to the universal ribosomal protein uL30 family. Part of the 50S ribosomal subunit.

The protein is Large ribosomal subunit protein uL30 of Rhodococcus erythropolis (strain PR4 / NBRC 100887).